The primary structure comprises 192 residues: Interleukin-18 (192 aa).

Positions Met-1–Asp-35 are excised as a propeptide.

This sequence belongs to the IL-1 family. As to quaternary structure, forms a ternary complex with ligand-binding receptor subunit IL18R1 and signaling receptor subunit IL18RAP at the plasma membrane. Mature IL18 first binds to IL18R1 forming a low affinity binary complex, which then interacts with IL18RAP to form a high affinity ternary complex that signals inside the cell. Interacts with cargo receptor TMED10; the interaction mediates the translocation from the cytoplasm into the ERGIC (endoplasmic reticulum-Golgi intermediate compartment) and thereby secretion. Post-translationally, the pro-IL-18 precursor is processed by CASP1, CASP4 or CASP5 to yield its mature, active form. The pro-IL-18 precursor features autoinhibitory interactions between the propeptide and the post-cleavage-site region, preventing recognition by the IL18R1 receptor. Processing by CASP1, CASP4 or CASP5 induces conformational changes to generate critical receptor-binding sites. The mature form is then secreted and released in the extracellular milieu by passing through the gasdermin-D (GSDMD) pore. In contrast, cleavage by CASP3 inactivates IL18.

The protein localises to the cytoplasm. It is found in the cytosol. It localises to the secreted. In terms of biological role, pro-inflammatory cytokine primarily involved in epithelial barrier repair, polarized T-helper 1 (Th1) cell and natural killer (NK) cell immune responses. Upon binding to IL18R1 and IL18RAP, forms a signaling ternary complex which activates NF-kappa-B, triggering synthesis of inflammatory mediators. Synergizes with IL12/interleukin-12 to induce IFNG synthesis from T-helper 1 (Th1) cells and natural killer (NK) cells. Involved in transduction of inflammation downstream of pyroptosis: its mature form is specifically released in the extracellular milieu by passing through the gasdermin-D (GSDMD) pore. The polypeptide is Interleukin-18 (IL18) (Sus scrofa (Pig)).